Reading from the N-terminus, the 297-residue chain is MAKDLRGVMPALLTPFDNQQKLDIESLRRLVRFNIAQGIDGLYVGGSTGEAFVQSRAEREQVLEIVAEEAKGKVTLIAHVGTVSTEESQQLASAAHRYGFDAVSAVTPFYYPFSFEEHCDHYRAIIDSAEGLPMVVYNIPALSGVKLTLDQINTLVTLPGVGALKQTSGDLYQMEQIRRAHPDLVLYNGYDEIFASGLLAGADGGIGSTYNIMGWRYQGIVKALQEGDVAKAQHLQTECNKVIDLLIKTGVFRGLKTVLHYMDVVSVPLCRKPFSPVDEKYLPELKALAQQLMQERG.

Residues Ser47 and Thr48 each coordinate aceneuramate. Tyr137 functions as the Proton donor in the catalytic mechanism. Lys165 (schiff-base intermediate with substrate) is an active-site residue. Positions 167, 189, 191, 192, and 208 each coordinate aceneuramate.

Belongs to the DapA family. NanA subfamily. In terms of assembly, homotetramer.

It localises to the cytoplasm. The enzyme catalyses aceneuramate = aldehydo-N-acetyl-D-mannosamine + pyruvate. It participates in amino-sugar metabolism; N-acetylneuraminate degradation; D-fructose 6-phosphate from N-acetylneuraminate: step 1/5. In terms of biological role, catalyzes the reversible aldol cleavage of N-acetylneuraminic acid (sialic acid; Neu5Ac) to form pyruvate and N-acetylmannosamine (ManNAc) via a Schiff base intermediate. The chain is N-acetylneuraminate lyase from Citrobacter koseri (strain ATCC BAA-895 / CDC 4225-83 / SGSC4696).